Here is a 309-residue protein sequence, read N- to C-terminus: GDP-6-deoxy-D-mannose reductase (309 aa).

NADP(+)-binding positions include Phe-11–Val-12, Arg-32, Asp-47–Ile-48, and Ala-71–Ser-73. Ser-114 to Ser-115 serves as a coordination point for substrate. Tyr-140 serves as a coordination point for NADP(+). Substrate-binding positions include Asn-169, Asp-183, Arg-209, and Arg-269–Glu-272.

This sequence belongs to the NAD(P)-dependent epimerase/dehydratase family. GDP-6-deoxy-D-mannose reductase subfamily.

It carries out the reaction GDP-alpha-D-rhamnose + NAD(+) = GDP-4-dehydro-alpha-D-rhamnose + NADH + H(+). The catalysed reaction is GDP-alpha-D-rhamnose + NADP(+) = GDP-4-dehydro-alpha-D-rhamnose + NADPH + H(+). Its function is as follows. Reductase that catalyzes the conversion of GDP-6-deoxy-D-mannose to GDP-4-dehydro-6-deoxy-D-mannose (GDP-D-rhamnose). The sequence is that of GDP-6-deoxy-D-mannose reductase (rmd) from Aneurinibacillus thermoaerophilus.